A 373-amino-acid polypeptide reads, in one-letter code: Capsular polysaccharide phosphotransferase (373 aa).

The protein belongs to the stealth family.

Part of a capsule gene locus. Expression was not detected under standard growth conditions. The protein is Capsular polysaccharide phosphotransferase of Neisseria meningitidis serogroup B.